A 136-amino-acid chain; its full sequence is Cytidine deaminase (136 aa).

The 128-residue stretch at 1–128 (MDVEKLIAES…KLLPGAFSKE (128 aa)) folds into the CMP/dCMP-type deaminase domain. 42 to 44 (NIE) serves as a coordination point for substrate. Position 53 (cysteine 53) interacts with Zn(2+). The Proton donor role is filled by glutamate 55. Zn(2+) is bound by residues cysteine 86 and cysteine 89.

Belongs to the cytidine and deoxycytidylate deaminase family. Zn(2+) is required as a cofactor.

The catalysed reaction is cytidine + H2O + H(+) = uridine + NH4(+). It catalyses the reaction 2'-deoxycytidine + H2O + H(+) = 2'-deoxyuridine + NH4(+). Functionally, this enzyme scavenges exogenous and endogenous cytidine and 2'-deoxycytidine for UMP synthesis. In Sporosarcina psychrophila (Bacillus psychrophilus), this protein is Cytidine deaminase (cdd).